We begin with the raw amino-acid sequence, 331 residues long: 6-phosphogluconolactonase (331 aa).

N6-acetyllysine is present on K287.

This sequence belongs to the cycloisomerase 2 family.

The catalysed reaction is 6-phospho-D-glucono-1,5-lactone + H2O = 6-phospho-D-gluconate + H(+). The protein operates within carbohydrate degradation; pentose phosphate pathway; D-ribulose 5-phosphate from D-glucose 6-phosphate (oxidative stage): step 2/3. In terms of biological role, catalyzes the hydrolysis of 6-phosphogluconolactone to 6-phosphogluconate. This is 6-phosphogluconolactonase from Shigella flexneri.